The following is a 320-amino-acid chain: Geranylgeranyl pyrophosphate synthase (320 aa).

Residues K35, R38, and H67 each coordinate isopentenyl diphosphate. Residues D74 and D78 each contribute to the Mg(2+) site. R83 contacts dimethylallyl diphosphate. R84 provides a ligand contact to isopentenyl diphosphate. Positions 168, 169, 206, 223, and 233 each coordinate dimethylallyl diphosphate.

It belongs to the FPP/GGPP synthase family. Mg(2+) serves as cofactor.

It is found in the cytoplasm. It catalyses the reaction isopentenyl diphosphate + dimethylallyl diphosphate = (2E)-geranyl diphosphate + diphosphate. It carries out the reaction isopentenyl diphosphate + (2E)-geranyl diphosphate = (2E,6E)-farnesyl diphosphate + diphosphate. The catalysed reaction is isopentenyl diphosphate + (2E,6E)-farnesyl diphosphate = (2E,6E,10E)-geranylgeranyl diphosphate + diphosphate. It participates in isoprenoid biosynthesis; farnesyl diphosphate biosynthesis; farnesyl diphosphate from geranyl diphosphate and isopentenyl diphosphate: step 1/1. The protein operates within isoprenoid biosynthesis; geranyl diphosphate biosynthesis; geranyl diphosphate from dimethylallyl diphosphate and isopentenyl diphosphate: step 1/1. Its pathway is isoprenoid biosynthesis; geranylgeranyl diphosphate biosynthesis; geranylgeranyl diphosphate from farnesyl diphosphate and isopentenyl diphosphate: step 1/1. Catalyzes the trans-addition of the 3 molecules of IPP onto DMAPP to form geranylgeranyl pyrophosphate. May be involved in vesicle trafficking and protein sorting. In Eremothecium gossypii (strain ATCC 10895 / CBS 109.51 / FGSC 9923 / NRRL Y-1056) (Yeast), this protein is Geranylgeranyl pyrophosphate synthase (BTS1).